The chain runs to 266 residues: Type II iodothyronine deiodinase (266 aa).

At 1–13 (MGSASEDLLVTLQ) the chain is on the lumenal side. The chain crosses the membrane as a helical; Signal-anchor for type III membrane protein span at residues 14-34 (ILPGFFSNCLFLALYDSVVLV). Residues 35-266 (KRVVALLSRS…QWLELSYGRR (232 aa)) lie on the Cytoplasmic side of the membrane. Selenocysteine 134 is a catalytic residue. A non-standard amino acid (selenocysteine) is located at residue selenocysteine 134.

This sequence belongs to the iodothyronine deiodinase family. As to quaternary structure, predominantly monomer. Can form homodimers but homodimerization is not essential for enzyme activity.

The protein resides in the endoplasmic reticulum membrane. It catalyses the reaction 3,3',5-triiodo-L-thyronine + iodide + A + H(+) = L-thyroxine + AH2. The enzyme catalyses 3,3'-diiodo-L-thyronine + iodide + A + H(+) = 3,3',5'-triiodo-L-thyronine + AH2. It carries out the reaction 3'-iodo-L-thyronine + iodide + A + H(+) = 3',5'-diiodo-L-thyronine + AH2. Not inhibited by N(6)-propylthiouracil. In terms of biological role, plays a crucial role in the metabolism of thyroid hormones (TH) and has specific roles in TH activation and inactivation by deiodination. Catalyzes the conversion of T4 (L-thyroxine/3,5,3',5'-tetraiodothyronine) to T3 (3,5,3'-triiodothyronine) and rT3 (3,3',5'-triiodothyronine) to T2 (3,3'-diiodothyronine) via outer-ring deiodination (ORD). Catalyzes the conversion 3',5'-T2 (3,5-diiodothyronine) to 3-T1 (3-monoiodothyronine) via ORD. The protein is Type II iodothyronine deiodinase (dio2) of Fundulus heteroclitus (Killifish).